The following is a 472-amino-acid chain: Adenosylhomocysteinase (472 aa).

Substrate is bound by residues threonine 64, aspartate 138, and glutamate 198. 199–201 is a binding site for NAD(+); that stretch reads TTT. Positions 228 and 232 each coordinate substrate. Residues asparagine 233, 262–267, glutamate 285, asparagine 320, 341–343, and asparagine 386 each bind NAD(+); these read GFGDVG and IGH.

Belongs to the adenosylhomocysteinase family. It depends on NAD(+) as a cofactor.

The protein resides in the cytoplasm. It carries out the reaction S-adenosyl-L-homocysteine + H2O = L-homocysteine + adenosine. Its pathway is amino-acid biosynthesis; L-homocysteine biosynthesis; L-homocysteine from S-adenosyl-L-homocysteine: step 1/1. May play a key role in the regulation of the intracellular concentration of adenosylhomocysteine. In Prochlorococcus marinus subsp. pastoris (strain CCMP1986 / NIES-2087 / MED4), this protein is Adenosylhomocysteinase.